The primary structure comprises 368 residues: Aminomethyltransferase (368 aa).

It belongs to the GcvT family. The glycine cleavage system is composed of four proteins: P, T, L and H.

It catalyses the reaction N(6)-[(R)-S(8)-aminomethyldihydrolipoyl]-L-lysyl-[protein] + (6S)-5,6,7,8-tetrahydrofolate = N(6)-[(R)-dihydrolipoyl]-L-lysyl-[protein] + (6R)-5,10-methylene-5,6,7,8-tetrahydrofolate + NH4(+). Its function is as follows. The glycine cleavage system catalyzes the degradation of glycine. The polypeptide is Aminomethyltransferase (Thermoanaerobacter sp. (strain X514)).